Consider the following 364-residue polypeptide: DNA polymerase IV (364 aa).

The UmuC domain maps to 8-189 (IIHIDMDCYF…LPLTKIPGVG (182 aa)). D12 and D107 together coordinate Mg(2+). The active site involves E108.

Belongs to the DNA polymerase type-Y family. In terms of assembly, monomer. Requires Mg(2+) as cofactor.

The protein resides in the cytoplasm. The enzyme catalyses DNA(n) + a 2'-deoxyribonucleoside 5'-triphosphate = DNA(n+1) + diphosphate. Poorly processive, error-prone DNA polymerase involved in untargeted mutagenesis. Copies undamaged DNA at stalled replication forks, which arise in vivo from mismatched or misaligned primer ends. These misaligned primers can be extended by PolIV. Exhibits no 3'-5' exonuclease (proofreading) activity. May be involved in translesional synthesis, in conjunction with the beta clamp from PolIII. This Shewanella woodyi (strain ATCC 51908 / MS32) protein is DNA polymerase IV.